The primary structure comprises 220 residues: Thiopurine S-methyltransferase (220 aa).

S-adenosyl-L-methionine-binding residues include W10, L45, E66, and R123.

The protein belongs to the class I-like SAM-binding methyltransferase superfamily. TPMT family.

It localises to the cytoplasm. The catalysed reaction is S-adenosyl-L-methionine + a thiopurine = S-adenosyl-L-homocysteine + a thiopurine S-methylether.. The sequence is that of Thiopurine S-methyltransferase from Pseudomonas syringae pv. syringae (strain B728a).